The primary structure comprises 519 residues: NAD-dependent histone deacetylase SIR2 (519 aa).

The disordered stretch occupies residues 154–212 (EIDENDNKNDGTNNSDIDSDIDSNSDMDSQSESGELDDAMDVDDSLSENEDEYDQDMST). Positions 187 to 208 (GELDDAMDVDDSLSENEDEYDQ) are enriched in acidic residues. Residues 221–486 (MTPFKYKLPD…SYLCKCLKWD (266 aa)) form the Deacetylase sirtuin-type domain. NAD(+) is bound by residues 246-265 (GAGISTSLGIPDFRSFKGLY) and 328-331 (QNID). His-348 (proton acceptor) is an active-site residue. Zn(2+) contacts are provided by Cys-356, Cys-359, Cys-380, and Cys-383. Residues 430–432 (GTS), 455–457 (NKD), and Cys-472 each bind NAD(+).

The protein belongs to the sirtuin family. Class I subfamily. In terms of assembly, interacts with HXK1. It depends on Zn(2+) as a cofactor.

The protein localises to the nucleus. The catalysed reaction is N(6)-acetyl-L-lysyl-[protein] + NAD(+) + H2O = 2''-O-acetyl-ADP-D-ribose + nicotinamide + L-lysyl-[protein]. Its function is as follows. NAD-dependent deacetylase. Heterochromatin component that silences transcription at silent mating loci, telomeres and the ribosomal DNA, and that also suppresses recombination in the rDNA and extends replicative life span. It acts as a NAD-dependent histone deacetylase, which deacetylates 'Lys-9' and 'Lys-14' of Histone H3 and 'Lys-16' of Histone H4. Functions in the distribution of oxidatively damaged proteins during cell division. Mediates phenotypic switching. This Candida albicans (strain SC5314 / ATCC MYA-2876) (Yeast) protein is NAD-dependent histone deacetylase SIR2.